Reading from the N-terminus, the 804-residue chain is MQSGHYNRRQSRRQRISSNTTDSPRHTHGTRYRSTNWYTHPPQILSNSETLVAVQELLNSEMDQDSSSDASDDFPGYALHHSTYNGSEQNTSTSRHENRIFKLTEREANEEININTDAIDDEGEAEEGEAEEDAIDDEGEAEEGEAEEDAIDDEGEAEEGEAEEDAAEEDAIDDEGEAEEDAIDDEGEAEEDAIDDEGEAEEDYFSVSQVCSRDADEVYFTLDPEISYSTDLRIAKVMEPAVSKELNVSKRCVEPVTLTGSMLAHNGFDESWFAMRECTRREYITVQGLYDPIHLRYQFDTSRMTPPQILRTIPALPNMTLGELLLIFPIEFMAQPISIERILVEDVFLDRRASSKTHKYGPRWNSVYALPYNAGKMYVQHIPGFYDVSLRAVGQGTAIWHHMILSTAACAISNRISHGDGLGFLLDAAIRISANCIFLGRNDNFGVGDPCWLEDHLAGLPREAVPDVLQVTQLVLPNRGPTVAIMRGFFGALAYWPELRIAISEPSTSLVRYATGHMELAEWFLFSRTHSLKPQFTPTEREMLASFFTLYVTLGGGMLNWICRATAMYLAAPYHSRSAYIAVCESLPYYYIPVNSDLLCDLEVLLLGEVDLPTVCESYATIAHELTGYEAVRTAATNFMIEFADCYKESETDLMVSAYLGAVLLLQRVLGHANLLLLLLSGAALYGGCSIYIPRGILDAYNTLMLAASPLYAHQTLTSFWKDRDDAMQTLGIRPTTDVLPKEQDRIVQASPIEMNFRFVGLETIYPREQPIPSVDLAENLMQYRNEILGLDWKSVAMHLLRKY.

Residues 1 to 15 show a composition bias toward basic residues; it reads MQSGHYNRRQSRRQR. Disordered regions lie at residues 1–42 and 58–206; these read MQSG…THPP and LNSE…DYFS. The Nuclear localization signal motif lies at 11 to 31; the sequence is SRRQRISSNTTDSPRHTHGTR. The span at 32–42 shows a compositional bias: polar residues; sequence YRSTNWYTHPP. A compositionally biased stretch (acidic residues) spans 62–72; that stretch reads MDQDSSSDASD. Over residues 82–93 the composition is skewed to polar residues; it reads STYNGSEQNTST. Positions 94–109 are enriched in basic and acidic residues; it reads SRHENRIFKLTEREAN. 3 tandem repeats follow at residues 117–132, 133–148, and 149–164. The 6 X 16 AA approximate tandem repeats stretch occupies residues 117–203; it reads DAIDDEGEAE…IDDEGEAEED (87 aa). The segment covering 118–204 has biased composition (acidic residues); sequence AIDDEGEAEE…DDEGEAEEDY (87 aa). One copy of the 1-4; truncated repeat lies at 170 to 180; the sequence is DAIDDEGEAEE. A 1-5; truncated repeat occupies 181-191; that stretch reads DAIDDEGEAEE. The 1-6; truncated repeat unit spans residues 192-203; the sequence is DAIDDEGEAEED. A Nuclear export signal motif is present at residues 770–792; the sequence is QPIPSVDLAENLMQYRNEILGLD.

This sequence belongs to the alphaherpesvirinae HHV-1 UL47 family. In terms of assembly, interacts with US3 kinase. Interacts with ORF24 and ORF27; these interactions seem important for efficient virion nuclear egress. Interacts with ORF17/VHS. Phosphorylated by US3. This phosphorylation is required for proper nuclear localization.

The protein resides in the virion tegument. The protein localises to the host nucleus. It localises to the host cytoplasm. In terms of biological role, tegument protein that can bind to various RNA transcripts. Plays a role in the attenuation of selective viral and cellular mRNA degradation by modulating the activity of host shutoff RNase ORF17/VHS. Also plays a role in the primary envelopment of virions in the perinuclear space, probably by interacting with two nuclear egress proteins ORF24 and ORF27. The protein is Tegument protein UL47 homolog of Varicella-zoster virus (strain Oka vaccine) (HHV-3).